The chain runs to 91 residues: Em-like protein (91 aa).

2 stretches are compositionally biased toward basic and acidic residues: residues 1 to 18 (MEQQ…REGE) and 31 to 51 (DAQE…KEQI). Residues 1–91 (MEQQQDRREL…PIDESKYRHP (91 aa)) form a disordered region. The span at 62–73 (KGGLSSAGGPGG) shows a compositional bias: gly residues. Residues 75 to 91 (RASEEGRPIDESKYRHP) show a composition bias toward basic and acidic residues.

It belongs to the small hydrophilic plant seed protein family.

In Picea glauca (White spruce), this protein is Em-like protein.